We begin with the raw amino-acid sequence, 199 residues long: Charged multivesicular body protein 1b (199 aa).

A coiled-coil region spans residues D26 to A48. The tract at residues M132–M156 is interaction with IST1. The disordered stretch occupies residues E167 to V199. Residues Q170 to S182 show a composition bias toward polar residues. The tract at residues G174–V199 is interaction with SPAST. Positions T178 to V199 form a coiled coil. Residues V180–R196 form an interaction with VPS4A, MITD1 and STAMBP region. The segment at V180–V199 is interaction with VTA1. The interaction with VPS4B stretch occupies residues A183–V199. Residues D186–R196 carry the MIT-interacting motif motif.

Belongs to the SNF7 family. In terms of assembly, probable peripherally associated component of the endosomal sorting required for transport complex III (ESCRT-III). ESCRT-III components are thought to multimerize to form a flat lattice on the perimeter membrane of the endosome. Several assembly forms of ESCRT-III may exist that interact and act sequentially. Interacts with CHMP1A. Interacts with VTA1; the interaction probably involves the open conformation of CHMP1B. Interacts with CHMP2A. Interacts with VPS4A; the interaction is direct. Interacts with VPS4B; the interaction is direct. Interacts with SPAST (via MIT domain); the interaction is direct. Interacts with IST1. Interacts with MITD1. Interacts with STAMBP.

The protein resides in the cytoplasm. It localises to the cytosol. Its subcellular location is the endosome. It is found in the late endosome membrane. Functionally, probable peripherally associated component of the endosomal sorting required for transport complex III (ESCRT-III) which is involved in multivesicular bodies (MVBs) formation and sorting of endosomal cargo proteins into MVBs. MVBs contain intraluminal vesicles (ILVs) that are generated by invagination and scission from the limiting membrane of the endosome and mostly are delivered to lysosomes enabling degradation of membrane proteins, such as stimulated growth factor receptors, lysosomal enzymes and lipids. The MVB pathway appears to require the sequential function of ESCRT-O, -I,-II and -III complexes. ESCRT-III proteins mostly dissociate from the invaginating membrane before the ILV is released. The ESCRT machinery also functions in topologically equivalent membrane fission events, such as the terminal stages of cytokinesis and the budding of enveloped viruses (lentiviruses). ESCRT-III proteins are believed to mediate the necessary vesicle extrusion and/or membrane fission activities, possibly in conjunction with the AAA ATPase VPS4. Involved in cytokinesis. Involved in recruiting VPS4A and/or VPS4B and SPAST to the midbody of dividing cells. The polypeptide is Charged multivesicular body protein 1b (CHMP1B) (Bos taurus (Bovine)).